The chain runs to 340 residues: MTLISSPIKRLDNKPPIWLMRQAGRYLSEYMAVRKEVKNFLEFCYDVDKATEVTLQPIKRFGFDAAIIFSDILVLPHALGWEVDFKENIGPLLKQFKSKEDFKYLQDNSNDKLEKVYEIVKKVRKELPKSTSLIGFAGSPWTVMTYMLEGKGKQDFRVSKKFIYENKDLAKELLNFITEKTIHHLINQIKSGANIIKIFDSWAGILPEEEFKKFVIEPTKKIIKSIKGYFPDIPIITFPKGAGLLYEKFLEEVPTDIIAIDPLIPLEKMKLWSNKVTVQGNLDPVILLTNKKIIKEKIHKILSIMENKNFIFNLGHGILPETPPENVEFLVKCIREYEYK.

Substrate-binding positions include 21–25 (RQAGR), Phe40, Asp71, Tyr146, Ser201, and His316.

It belongs to the uroporphyrinogen decarboxylase family. As to quaternary structure, homodimer.

It is found in the cytoplasm. It carries out the reaction uroporphyrinogen III + 4 H(+) = coproporphyrinogen III + 4 CO2. It functions in the pathway porphyrin-containing compound metabolism; protoporphyrin-IX biosynthesis; coproporphyrinogen-III from 5-aminolevulinate: step 4/4. Functionally, catalyzes the decarboxylation of four acetate groups of uroporphyrinogen-III to yield coproporphyrinogen-III. In Rickettsia bellii (strain RML369-C), this protein is Uroporphyrinogen decarboxylase.